The following is a 400-amino-acid chain: Lysophospholipid transporter LplT (400 aa).

The next 12 helical transmembrane spans lie at 19-39 (VIVA…ATLA), 53-73 (VLQM…GQIA), 91-111 (AGAA…LVGI), 139-159 (LMEA…GVLA), 164-184 (IAAL…NLFI), 195-213 (SWRL…VVLW), 227-247 (LFWG…PVAL), 257-277 (YLNA…AKLV), 281-301 (TVSR…IFSL), 304-324 (ALLP…FFVV), 352-372 (NSAM…GVPA), and 373-393 (VAIG…LWIW).

It belongs to the major facilitator superfamily. LplT (TC 2.A.1.42) family.

It localises to the cell inner membrane. In terms of biological role, catalyzes the facilitated diffusion of 2-acyl-glycero-3-phosphoethanolamine (2-acyl-GPE) into the cell. The protein is Lysophospholipid transporter LplT of Salmonella typhi.